Here is a 21-residue protein sequence, read N- to C-terminus: Hydroxypicolinic acid-activating enzyme (21 aa).

In terms of biological role, involved in etamycin biosynthesis. This Streptomyces griseoviridis protein is Hydroxypicolinic acid-activating enzyme.